The following is a 258-amino-acid chain: Tropinone reductase-like 3 (258 aa).

19-43 provides a ligand contact to NAD(+); the sequence is IVTASTQGIGFAIAYRLGLEGAAVV. Residue Ser150 participates in substrate binding. The active-site Proton acceptor is the Tyr163.

This sequence belongs to the short-chain dehydrogenases/reductases (SDR) family.

Its function is as follows. Has no tropinone reductase activity. The protein is Tropinone reductase-like 3 of Erythroxylum coca (Coca plant).